A 471-amino-acid polypeptide reads, in one-letter code: Glutamate--tRNA ligase (471 aa).

The 'HIGH' region motif lies at 9–19 (PSPTGYLHVGG). Zn(2+)-binding residues include C98, C100, C125, and D127. Positions 237–241 (KLSKR) match the 'KMSKS' region motif. ATP is bound at residue K240.

It belongs to the class-I aminoacyl-tRNA synthetase family. Glutamate--tRNA ligase type 1 subfamily. As to quaternary structure, monomer. It depends on Zn(2+) as a cofactor.

The protein resides in the cytoplasm. The enzyme catalyses tRNA(Glu) + L-glutamate + ATP = L-glutamyl-tRNA(Glu) + AMP + diphosphate. Catalyzes the attachment of glutamate to tRNA(Glu) in a two-step reaction: glutamate is first activated by ATP to form Glu-AMP and then transferred to the acceptor end of tRNA(Glu). The protein is Glutamate--tRNA ligase of Yersinia pseudotuberculosis serotype O:1b (strain IP 31758).